Here is a 228-residue protein sequence, read N- to C-terminus: Lactate utilization protein A (228 aa).

It belongs to the LutA/YkgE family.

Is involved in L-lactate degradation and allows cells to grow with lactate as the sole carbon source. The chain is Lactate utilization protein A from Lysinibacillus sphaericus (strain C3-41).